The chain runs to 480 residues: tRNA (uracil-5-)-methyltransferase homolog B (480 aa).

Residues glutamine 299, glutamate 349, and asparagine 399 each contribute to the S-adenosyl-L-methionine site. The active-site Nucleophile is cysteine 427. The Proton acceptor role is filled by glutamate 473.

The protein belongs to the class I-like SAM-binding methyltransferase superfamily. RNA M5U methyltransferase family.

The protein resides in the mitochondrion. It carries out the reaction uridine(54) in tRNA + S-adenosyl-L-methionine = 5-methyluridine(54) in tRNA + S-adenosyl-L-homocysteine + H(+). It catalyses the reaction a uridine in 12S rRNA + S-adenosyl-L-methionine = a 5-methyluridine in 12S rRNA + S-adenosyl-L-homocysteine + H(+). Functionally, mitochondrial S-adenosyl-L-methionine-dependent methyltransferase that catalyzes the formation of 5-methyl-uridine in tRNAs and 12S rRNA. Catalyzes the methylation of uridine at position 54 (m5U54) in all tRNAs. Specifically methylates the uridine in position 429 of 12S rRNA (m5U429). Does not affect RNA stability or mitochondrial translation. The protein is tRNA (uracil-5-)-methyltransferase homolog B (trmt2b) of Danio rerio (Zebrafish).